Here is a 199-residue protein sequence, read N- to C-terminus: uncharacterized protein (199 aa).

A helical membrane pass occupies residues 7 to 27; sequence FWFWLILGIIALFIIVKAIVI.

This sequence belongs to the band 7/mec-2 family.

Its subcellular location is the membrane. This is an uncharacterized protein from Methanocaldococcus jannaschii (strain ATCC 43067 / DSM 2661 / JAL-1 / JCM 10045 / NBRC 100440) (Methanococcus jannaschii).